A 430-amino-acid polypeptide reads, in one-letter code: UDP-N-acetylglucosamine 1-carboxyvinyltransferase 1 (430 aa).

22 to 23 (KN) lines the phosphoenolpyruvate pocket. Arg-102 provides a ligand contact to UDP-N-acetyl-alpha-D-glucosamine. The active-site Proton donor is the Cys-126. The residue at position 126 (Cys-126) is a 2-(S-cysteinyl)pyruvic acid O-phosphothioketal. UDP-N-acetyl-alpha-D-glucosamine-binding positions include 131-135 (RPVDL), 172-175 (KVSV), Asp-317, and Ile-339.

It belongs to the EPSP synthase family. MurA subfamily.

The protein resides in the cytoplasm. It carries out the reaction phosphoenolpyruvate + UDP-N-acetyl-alpha-D-glucosamine = UDP-N-acetyl-3-O-(1-carboxyvinyl)-alpha-D-glucosamine + phosphate. It functions in the pathway cell wall biogenesis; peptidoglycan biosynthesis. In terms of biological role, cell wall formation. Adds enolpyruvyl to UDP-N-acetylglucosamine. The protein is UDP-N-acetylglucosamine 1-carboxyvinyltransferase 1 of Mesorhizobium japonicum (strain LMG 29417 / CECT 9101 / MAFF 303099) (Mesorhizobium loti (strain MAFF 303099)).